The chain runs to 111 residues: Large ribosomal subunit protein uL22 (111 aa).

It belongs to the universal ribosomal protein uL22 family. Part of the 50S ribosomal subunit.

Functionally, this protein binds specifically to 23S rRNA; its binding is stimulated by other ribosomal proteins, e.g. L4, L17, and L20. It is important during the early stages of 50S assembly. It makes multiple contacts with different domains of the 23S rRNA in the assembled 50S subunit and ribosome. The globular domain of the protein is located near the polypeptide exit tunnel on the outside of the subunit, while an extended beta-hairpin is found that lines the wall of the exit tunnel in the center of the 70S ribosome. The polypeptide is Large ribosomal subunit protein uL22 (Clostridium beijerinckii (strain ATCC 51743 / NCIMB 8052) (Clostridium acetobutylicum)).